We begin with the raw amino-acid sequence, 480 residues long: Wax ester synthase/diacylglycerol acyltransferase 7 (480 aa).

Over methionine 1 to threonine 193 the chain is Cytoplasmic. Residue histidine 135 is the Proton acceptor of the active site. Residues methionine 194 to leucine 214 traverse the membrane as a helical segment. At lysine 215–asparagine 329 the chain is on the lumenal side. Asparagine 252 is a glycosylation site (N-linked (GlcNAc...) asparagine). A helical transmembrane segment spans residues tyrosine 330–leucine 350. Topologically, residues lysine 351–histidine 365 are cytoplasmic. Residues alanine 366–alanine 386 traverse the membrane as a helical segment. At glutamate 387–leucine 480 the chain is on the lumenal side. Residue asparagine 395 is glycosylated (N-linked (GlcNAc...) asparagine).

In the N-terminal section; belongs to the long-chain O-acyltransferase family. In terms of tissue distribution, expressed in roots, stems, leaves, flowers and siliques.

The protein resides in the cell membrane. The protein localises to the endoplasmic reticulum membrane. It is found in the golgi apparatus membrane. It carries out the reaction an acyl-CoA + a 1,2-diacyl-sn-glycerol = a triacyl-sn-glycerol + CoA. The enzyme catalyses a long chain fatty alcohol + a fatty acyl-CoA = a wax ester + CoA. It participates in glycerolipid metabolism; triacylglycerol biosynthesis. The protein operates within lipid metabolism. Its function is as follows. Bifunctional wax ester synthase/diacylglycerol acyltransferase that uses acyl-CoAs with 14, 16 and 18 carbons as substrates, preferably in combination with 16:0ol alcohol. Involved in cuticular wax biosynthesis. This is Wax ester synthase/diacylglycerol acyltransferase 7 from Arabidopsis thaliana (Mouse-ear cress).